The primary structure comprises 297 residues: 4-diphosphocytidyl-2-C-methyl-D-erythritol kinase (297 aa).

Lys22 is a catalytic residue. 111 to 121 serves as a coordination point for ATP; sequence PSQAGMGGGSS. The active site involves Asp153.

This sequence belongs to the GHMP kinase family. IspE subfamily.

It catalyses the reaction 4-CDP-2-C-methyl-D-erythritol + ATP = 4-CDP-2-C-methyl-D-erythritol 2-phosphate + ADP + H(+). It functions in the pathway isoprenoid biosynthesis; isopentenyl diphosphate biosynthesis via DXP pathway; isopentenyl diphosphate from 1-deoxy-D-xylulose 5-phosphate: step 3/6. Catalyzes the phosphorylation of the position 2 hydroxy group of 4-diphosphocytidyl-2C-methyl-D-erythritol. The sequence is that of 4-diphosphocytidyl-2-C-methyl-D-erythritol kinase from Polaromonas naphthalenivorans (strain CJ2).